Reading from the N-terminus, the 630-residue chain is Pro-interleukin-16 (630 aa).

Disordered stretches follow at residues 30–268 (ENPG…FPLT) and 316–343 (PKEG…ASDT). A compositionally biased stretch (low complexity) spans 129 to 143 (IRASSSSSIKQRISS). Phosphoserine is present on Ser-220. Residues 321–343 (SPTSSSNEDSAANGSAETSASDT) show a composition bias toward polar residues. The segment at 404–500 (KQLDSIHVTI…IVTRKLTAES (97 aa)) is interaction with PPP1R12A, PPP1R12B and PPP1R12C. PDZ domains follow at residues 410-495 (HVTI…VTRK) and 532-617 (TVTL…IRRK).

In terms of assembly, homotetramer. Pro-interleukin-16 interacts (via PDZ 2 domain) with PPP1R12A, PPP1R12B and PPP1R12C. Pro-interleukin-16 interacts with GRIN2A. Pro-interleukin-16 interacts with GABPB1. Pro-interleukin-16 interacts (via PDZ 3 domain) with HDAC3.

It is found in the secreted. Its subcellular location is the cytoplasm. It localises to the nucleus. Its function is as follows. Interleukin-16 stimulates a migratory response in CD4+ lymphocytes, monocytes, and eosinophils. Primes CD4+ T-cells for IL-2 and IL-15 responsiveness. Also induces T-lymphocyte expression of interleukin 2 receptor. Ligand for CD4. In terms of biological role, pro-interleukin-16 is involved in cell cycle progression in T-cells. Appears to be involved in transcriptional regulation of SKP2 and is probably part of a transcriptional repression complex on the core promoter of the SKP2 gene. May act as a scaffold for GABPB1 (the DNA-binding subunit the GABP transcription factor complex) and HDAC3 thus maintaining transcriptional repression and blocking cell cycle progression in resting T-cells. The polypeptide is Pro-interleukin-16 (IL16) (Macaca fascicularis (Crab-eating macaque)).